Here is a 204-residue protein sequence, read N- to C-terminus: Leucyl/phenylalanyl-tRNA--protein transferase (204 aa).

It belongs to the L/F-transferase family.

It localises to the cytoplasm. The catalysed reaction is N-terminal L-lysyl-[protein] + L-leucyl-tRNA(Leu) = N-terminal L-leucyl-L-lysyl-[protein] + tRNA(Leu) + H(+). The enzyme catalyses N-terminal L-arginyl-[protein] + L-leucyl-tRNA(Leu) = N-terminal L-leucyl-L-arginyl-[protein] + tRNA(Leu) + H(+). It catalyses the reaction L-phenylalanyl-tRNA(Phe) + an N-terminal L-alpha-aminoacyl-[protein] = an N-terminal L-phenylalanyl-L-alpha-aminoacyl-[protein] + tRNA(Phe). Functionally, functions in the N-end rule pathway of protein degradation where it conjugates Leu, Phe and, less efficiently, Met from aminoacyl-tRNAs to the N-termini of proteins containing an N-terminal arginine or lysine. In Sinorhizobium fredii (strain NBRC 101917 / NGR234), this protein is Leucyl/phenylalanyl-tRNA--protein transferase.